Here is a 148-residue protein sequence, read N- to C-terminus: Hemoglobin subunit beta (148 aa).

Residues 3–148 enclose the Globin domain; it reads XWTDXERHVI…AVAALGKQYH (146 aa). Positions 64 and 93 each coordinate heme b.

The protein belongs to the globin family. Heterotetramer of two alpha chains and two beta chains. In terms of tissue distribution, red blood cells.

Involved in oxygen transport from gills to the various peripheral tissues. The protein is Hemoglobin subunit beta (hbb) of Silurus asotus (Amur catfish).